Here is a 1441-residue protein sequence, read N- to C-terminus: ABC transporter G family member 51 (1441 aa).

Residues 52 to 71 (VLPDPDGLGGGDGGGRGEGQ) form a disordered region. Over residues 58–69 (GLGGGDGGGRGE) the composition is skewed to gly residues. The 275-residue stretch at 154–428 (LISSHLLRPD…FKSLGFSLPP (275 aa)) folds into the ABC transporter 1 domain. 187 to 194 (GPPASGKS) is a binding site for ATP. An ABC transmembrane type-2 1 domain is found at 505–718 (SLVRACFARE…AQRAVSVNEF (214 aa)). A run of 6 helical transmembrane segments spans residues 523–543 (FLYTFRTCQVAFVGIITSTLF), 558–578 (LYLACLFFGLVHMMFNGFTEM), 615–635 (FIEAVVWSCVVYYTVGFAPTV), 642–662 (MLLLFSIHQMALGLFRMMGAI), 668–688 (IASTFGSAVLLAIFLLGGFVV), and 751–771 (FWIGVGVLLAYSIFFNIMFTL). The ABC transporter 2 domain maps to 838-1090 (MTFHNVNYYV…DMINYFQGIP (253 aa)). Position 883-890 (883-890 (GASGSGKT)) interacts with ATP. Residues 1163–1380 (TQFMVCLRKQ…TLRGVITSQL (218 aa)) form the ABC transmembrane type-2 2 domain. 7 consecutive transmembrane segments (helical) span residues 1184 to 1204 (VVRLFFTSVAAIIFGSIFWNV), 1214 to 1234 (ILLLMGALYAACLFLGVNNAS), 1271 to 1291 (VEIPYIAVQTLIFGLITYFMV), 1300 to 1320 (LVLYLIYMFLTFTYFTFYGMV), 1330 to 1350 (MASVVSSAFYSLWNLLSGFLI), 1355 to 1375 (IPGWWIWFYYICPVAWTLRGV), and 1413 to 1433 (ATVAVLVAFSVFFFSIYAISI).

The protein belongs to the ABC transporter superfamily. ABCG family. PDR (TC 3.A.1.205) subfamily.

The protein resides in the membrane. May be a general defense protein. The chain is ABC transporter G family member 51 from Oryza sativa subsp. japonica (Rice).